Consider the following 383-residue polypeptide: Histidinol-phosphate aminotransferase (383 aa).

Position 240 is an N6-(pyridoxal phosphate)lysine (Lys240).

This sequence belongs to the class-II pyridoxal-phosphate-dependent aminotransferase family. Histidinol-phosphate aminotransferase subfamily. Homodimer. Pyridoxal 5'-phosphate serves as cofactor.

It carries out the reaction L-histidinol phosphate + 2-oxoglutarate = 3-(imidazol-4-yl)-2-oxopropyl phosphate + L-glutamate. It participates in amino-acid biosynthesis; L-histidine biosynthesis; L-histidine from 5-phospho-alpha-D-ribose 1-diphosphate: step 7/9. The sequence is that of Histidinol-phosphate aminotransferase from Oleidesulfovibrio alaskensis (strain ATCC BAA-1058 / DSM 17464 / G20) (Desulfovibrio alaskensis).